A 296-amino-acid chain; its full sequence is Cytidine deaminase (296 aa).

CMP/dCMP-type deaminase domains are found at residues 47–167 (SQDE…FGPA) and 186–296 (ESAD…VDPV). Residue 88–90 (NLE) coordinates substrate. Zn(2+) is bound at residue His101. The Proton donor role is filled by Glu103. Zn(2+) contacts are provided by Cys128 and Cys131.

Belongs to the cytidine and deoxycytidylate deaminase family. As to quaternary structure, homodimer. Zn(2+) is required as a cofactor.

The catalysed reaction is cytidine + H2O + H(+) = uridine + NH4(+). The enzyme catalyses 2'-deoxycytidine + H2O + H(+) = 2'-deoxyuridine + NH4(+). In terms of biological role, this enzyme scavenges exogenous and endogenous cytidine and 2'-deoxycytidine for UMP synthesis. This is Cytidine deaminase from Shewanella loihica (strain ATCC BAA-1088 / PV-4).